Here is a 125-residue protein sequence, read N- to C-terminus: L-fucose mutarotase (125 aa).

His-13 serves as the catalytic Proton donor.

The protein belongs to the RbsD / FucU family. FucU mutarotase subfamily.

The catalysed reaction is alpha-L-fucose = beta-L-fucose. Its activity is regulated as follows. Active toward L-galactopyranoside and D-arabinopyranoside but no D-fucopyranoside activity detected. Plays a role in the catabolism of L-fucose. Involved in the anomeric conversion of L-fucose. This chain is L-fucose mutarotase, found in Xanthomonas campestris pv. campestris (strain ATCC 33913 / DSM 3586 / NCPPB 528 / LMG 568 / P 25).